We begin with the raw amino-acid sequence, 379 residues long: S-adenosylmethionine:tRNA ribosyltransferase-isomerase (379 aa).

A disordered region spans residues 35–58 (AESRPHAESVPHAESRPHAESAFS).

This sequence belongs to the QueA family. As to quaternary structure, monomer.

Its subcellular location is the cytoplasm. The enzyme catalyses 7-aminomethyl-7-carbaguanosine(34) in tRNA + S-adenosyl-L-methionine = epoxyqueuosine(34) in tRNA + adenine + L-methionine + 2 H(+). It functions in the pathway tRNA modification; tRNA-queuosine biosynthesis. Its function is as follows. Transfers and isomerizes the ribose moiety from AdoMet to the 7-aminomethyl group of 7-deazaguanine (preQ1-tRNA) to give epoxyqueuosine (oQ-tRNA). The sequence is that of S-adenosylmethionine:tRNA ribosyltransferase-isomerase from Rhizobium leguminosarum bv. trifolii (strain WSM2304).